The sequence spans 323 residues: tRNA U34 carboxymethyltransferase (323 aa).

Residues Lys-91, Trp-105, Lys-110, Gly-130, 152–154 (DPT), 181–182 (IE), Met-196, Tyr-200, and Arg-315 each bind carboxy-S-adenosyl-L-methionine.

The protein belongs to the class I-like SAM-binding methyltransferase superfamily. CmoB family. Homotetramer.

The catalysed reaction is carboxy-S-adenosyl-L-methionine + 5-hydroxyuridine(34) in tRNA = 5-carboxymethoxyuridine(34) in tRNA + S-adenosyl-L-homocysteine + H(+). Functionally, catalyzes carboxymethyl transfer from carboxy-S-adenosyl-L-methionine (Cx-SAM) to 5-hydroxyuridine (ho5U) to form 5-carboxymethoxyuridine (cmo5U) at position 34 in tRNAs. The polypeptide is tRNA U34 carboxymethyltransferase (Shigella boydii serotype 18 (strain CDC 3083-94 / BS512)).